The sequence spans 248 residues: Triosephosphate isomerase (248 aa).

Substrate contacts are provided by asparagine 10 and lysine 12. Histidine 95 functions as the Electrophile in the catalytic mechanism. The active-site Proton acceptor is the glutamate 165.

This sequence belongs to the triosephosphate isomerase family. As to quaternary structure, homodimer.

It catalyses the reaction D-glyceraldehyde 3-phosphate = dihydroxyacetone phosphate. The protein operates within carbohydrate biosynthesis; gluconeogenesis. It functions in the pathway carbohydrate degradation; glycolysis; D-glyceraldehyde 3-phosphate from glycerone phosphate: step 1/1. This Zygosaccharomyces bailii protein is Triosephosphate isomerase (TPI1).